A 674-amino-acid polypeptide reads, in one-letter code: Anosmin-1 (674 aa).

The first 21 residues, 1–21, serve as a signal peptide directing secretion; it reads MVRRAPGASLALLLWVTAVSC. 4 cysteine pairs are disulfide-bonded: cysteine 47–cysteine 71, cysteine 80–cysteine 99, cysteine 84–cysteine 95, and cysteine 110–cysteine 114. A glycan (N-linked (GlcNAc...) asparagine) is linked at asparagine 65. The region spanning 121–170 is the WAP domain; the sequence is LSVKQGDCPAPEKASGFAAACFESCEADSECSGVKKCCSNGCGHTCQVPK. 4 Fibronectin type-III domains span residues 180-281, 286-392, 418-515, and 545-652; these read PRKE…SKDP, APSN…TTQD, RRKP…FFVT, and KPEN…DLPP. N-linked (GlcNAc...) asparagine glycosylation is found at asparagine 203 and asparagine 294. Positions 388–402 are enriched in polar residues; the sequence is STTQDNRNNNEQTSV. Residues 388-413 are disordered; sequence STTQDNRNNNEQTSVEKPPKGVVDPY. Residues asparagine 465, asparagine 548, and asparagine 559 are each glycosylated (N-linked (GlcNAc...) asparagine). The interval 655–674 is disordered; the sequence is PHRPHLKHHPHRYKPPPEKY. The span at 656–668 shows a compositional bias: basic residues; sequence HRPHLKHHPHRYK.

The protein localises to the cell surface. Its function is as follows. May be an adhesion-like molecule with anti-protease activity. The sequence is that of Anosmin-1 from Coturnix japonica (Japanese quail).